A 111-amino-acid polypeptide reads, in one-letter code: Large ribosomal subunit protein uL22 (111 aa).

The protein belongs to the universal ribosomal protein uL22 family. In terms of assembly, part of the 50S ribosomal subunit.

Its function is as follows. This protein binds specifically to 23S rRNA; its binding is stimulated by other ribosomal proteins, e.g. L4, L17, and L20. It is important during the early stages of 50S assembly. It makes multiple contacts with different domains of the 23S rRNA in the assembled 50S subunit and ribosome. The globular domain of the protein is located near the polypeptide exit tunnel on the outside of the subunit, while an extended beta-hairpin is found that lines the wall of the exit tunnel in the center of the 70S ribosome. This is Large ribosomal subunit protein uL22 from Mycoplasma capricolum subsp. capricolum (strain California kid / ATCC 27343 / NCTC 10154).